Reading from the N-terminus, the 247-residue chain is 3-deoxy-manno-octulosonate cytidylyltransferase (247 aa).

It belongs to the KdsB family.

It localises to the cytoplasm. It carries out the reaction 3-deoxy-alpha-D-manno-oct-2-ulosonate + CTP = CMP-3-deoxy-beta-D-manno-octulosonate + diphosphate. It participates in nucleotide-sugar biosynthesis; CMP-3-deoxy-D-manno-octulosonate biosynthesis; CMP-3-deoxy-D-manno-octulosonate from 3-deoxy-D-manno-octulosonate and CTP: step 1/1. The protein operates within bacterial outer membrane biogenesis; lipopolysaccharide biosynthesis. Functionally, activates KDO (a required 8-carbon sugar) for incorporation into bacterial lipopolysaccharide in Gram-negative bacteria. The polypeptide is 3-deoxy-manno-octulosonate cytidylyltransferase (Methylobacterium nodulans (strain LMG 21967 / CNCM I-2342 / ORS 2060)).